The following is a 504-amino-acid chain: Anaerobic nitric oxide reductase transcription regulator NorR (504 aa).

Residue Asp57 is modified to 4-aspartylphosphate. The region spanning 187 to 416 (MIGLSPGMTQ…LEHAIHRAVV (230 aa)) is the Sigma-54 factor interaction domain. ATP-binding positions include 215–222 (GETGTGKE) and 278–287 (ADNGTLFLDE). The H-T-H motif DNA-binding region spans 479 to 498 (WAACARMLETDVANLHRLAK).

It participates in nitrogen metabolism; nitric oxide reduction. Required for the expression of anaerobic nitric oxide (NO) reductase, acts as a transcriptional activator for at least the norVW operon. Activation also requires sigma-54. The polypeptide is Anaerobic nitric oxide reductase transcription regulator NorR (Escherichia coli O6:H1 (strain CFT073 / ATCC 700928 / UPEC)).